The sequence spans 58 residues: UPF0434 protein Sfri_2386 (58 aa).

This sequence belongs to the UPF0434 family.

The sequence is that of UPF0434 protein Sfri_2386 from Shewanella frigidimarina (strain NCIMB 400).